Here is a 313-residue protein sequence, read N- to C-terminus: Protein EMSY-LIKE 2 (313 aa).

An ENT domain is found at 1–88; the sequence is MEAQIHILEQ…HQSLDVHPSP (88 aa). Residues 35–58 are a coiled coil; that stretch reads MTNLRKELRISDDENRQLLNNVHN. 2 disordered regions span residues 84–106 and 195–229; these read VHPS…YPSI and LNVG…REHL. Residues 206 to 219 show a composition bias toward basic residues; it reads GNRRTLSHGGRGRG. Positions 267 to 293 form a coiled coil; sequence HELDKAKKLLKEHEQALIAAIARLTDA. Ser-294 is subject to Phosphoserine. The tract at residues 294 to 313 is disordered; sequence SDYESDGEEPYSHELPMLLG.

Interacts with EDM2 in nucleus.

The protein localises to the nucleus. In terms of biological role, probably involved in the regulation of chromatin states. Contributes to RPP7-mediated and basal immunity, especially against Hyaloperonospora arabidopsidis isolate Hiks1. Regulates negatively EDM2-dependent floral transition. This is Protein EMSY-LIKE 2 from Arabidopsis thaliana (Mouse-ear cress).